Consider the following 2075-residue polypeptide: Autophagy-related protein 2 homolog B (2075 aa).

A Chorein N-terminal domain is found at 13–107 (ACRYLLQRYL…LEMVFRPRPR (95 aa)). 7 positions are modified to phosphoserine: Ser-255, Ser-379, Ser-496, Ser-839, Ser-885, Ser-898, and Ser-1007. A Phosphotyrosine modification is found at Tyr-1011. 2 positions are modified to phosphoserine: Ser-1015 and Ser-1017. Thr-1021 carries the phosphothreonine modification. Positions 1373 to 1403 (KAEMKPGVPQRKPKVDSSARSSSHGPVLPEA) are disordered. Residue Ser-1525 is modified to Phosphoserine. Disordered regions lie at residues 1570 to 1593 (TSPA…GRHT), 1759 to 1792 (EPNL…EDVS), and 2055 to 2075 (RNQI…HGED). Residues 1578-1587 (PHSSPSQTPT) show a composition bias toward polar residues. Basic and acidic residues predominate over residues 2058–2075 (IRPDVRQDESQKWRHGED).

This sequence belongs to the ATG2 family. As to quaternary structure, interacts with WDR45/WIPI4.

Its subcellular location is the preautophagosomal structure membrane. The protein localises to the lipid droplet. It localises to the endoplasmic reticulum membrane. It catalyses the reaction a 1,2-diacyl-sn-glycero-3-phospho-L-serine(in) = a 1,2-diacyl-sn-glycero-3-phospho-L-serine(out). The catalysed reaction is a 1,2-diacyl-sn-glycero-3-phosphoethanolamine(in) = a 1,2-diacyl-sn-glycero-3-phosphoethanolamine(out). Its function is as follows. Lipid transfer protein required for both autophagosome formation and regulation of lipid droplet morphology and dispersion. Tethers the edge of the isolation membrane (IM) to the endoplasmic reticulum (ER) and mediates direct lipid transfer from ER to IM for IM expansion. Binds to the ER exit site (ERES), which is the membrane source for autophagosome formation, and extracts phospholipids from the membrane source and transfers them to ATG9 (ATG9A or ATG9B) to the IM for membrane expansion. Lipid transfer activity is enhanced by WDR45/WIPI4, which promotes ATG2B-association with phosphatidylinositol 3-monophosphate (PI3P)-containing membranes. The sequence is that of Autophagy-related protein 2 homolog B from Mus musculus (Mouse).